A 277-amino-acid chain; its full sequence is S-formylglutathione hydrolase FrmB (277 aa).

Active-site charge relay system residues include Ser-145, Asp-221, and His-254.

Belongs to the esterase D family.

The enzyme catalyses S-formylglutathione + H2O = formate + glutathione + H(+). Its function is as follows. Serine hydrolase involved in the detoxification of formaldehyde. Hydrolyzes S-formylglutathione to glutathione and formate. This is S-formylglutathione hydrolase FrmB (frmB) from Escherichia coli (strain K12 / DH10B).